The chain runs to 450 residues: Tubulin alpha-3 chain (450 aa).

Residue glutamine 11 participates in GTP binding. Residue lysine 40 is modified to N6-acetyllysine. Glutamate 71, serine 140, glycine 144, threonine 145, threonine 179, asparagine 206, and asparagine 228 together coordinate GTP. Glutamate 71 serves as a coordination point for Mg(2+). The active site involves glutamate 254.

This sequence belongs to the tubulin family. In terms of assembly, dimer of alpha and beta chains. A typical microtubule is a hollow water-filled tube with an outer diameter of 25 nm and an inner diameter of 15 nM. Alpha-beta heterodimers associate head-to-tail to form protofilaments running lengthwise along the microtubule wall with the beta-tubulin subunit facing the microtubule plus end conferring a structural polarity. Microtubules usually have 13 protofilaments but different protofilament numbers can be found in some organisms and specialized cells. The cofactor is Mg(2+). Undergoes a tyrosination/detyrosination cycle, the cyclic removal and re-addition of a C-terminal tyrosine residue by the enzymes tubulin tyrosine carboxypeptidase (TTCP) and tubulin tyrosine ligase (TTL), respectively. In terms of processing, acetylation of alpha chains at Lys-40 stabilizes microtubules and affects affinity and processivity of microtubule motors. This modification has a role in multiple cellular functions, ranging from cell motility, cell cycle progression or cell differentiation to intracellular trafficking and signaling. During the early stages of oogenesis lky/Alpha-tubulin N-acetyltransferase 2 is the main acetyltransferase responsible for Lys-40 acetylation in germline cells while Atat/alpha-tubulin N-acetyltransferase 1 is the main acetyltransferase responsible for Lys-40 acetylation in somatic cells.

The protein resides in the cytoplasm. It localises to the cytoskeleton. It catalyses the reaction GTP + H2O = GDP + phosphate + H(+). In terms of biological role, tubulin is the major constituent of microtubules, a cylinder consisting of laterally associated linear protofilaments composed of alpha- and beta-tubulin heterodimers. Microtubules grow by the addition of GTP-tubulin dimers to the microtubule end, where a stabilizing cap forms. Below the cap, tubulin dimers are in GDP-bound state, owing to GTPase activity of alpha-tubulin. The sequence is that of Tubulin alpha-3 chain (alphaTub84D) from Drosophila melanogaster (Fruit fly).